Consider the following 414-residue polypeptide: DNA polymerase IV (414 aa).

The UmuC domain maps to 8 to 189 (IFHIDMNSFY…LPIEEMHGIG (182 aa)). 2 residues coordinate Mg(2+): aspartate 12 and aspartate 108. Residue glutamate 109 is part of the active site. The tract at residues 394 to 414 (EESKTRGTSFNRDFFQDEKKR) is disordered.

Belongs to the DNA polymerase type-Y family. In terms of assembly, monomer. Mg(2+) serves as cofactor.

Its subcellular location is the cytoplasm. The catalysed reaction is DNA(n) + a 2'-deoxyribonucleoside 5'-triphosphate = DNA(n+1) + diphosphate. Poorly processive, error-prone DNA polymerase involved in untargeted mutagenesis. Copies undamaged DNA at stalled replication forks, which arise in vivo from mismatched or misaligned primer ends. These misaligned primers can be extended by PolIV. Exhibits no 3'-5' exonuclease (proofreading) activity. May be involved in translesional synthesis, in conjunction with the beta clamp from PolIII. This chain is DNA polymerase IV, found in Bacillus velezensis (strain DSM 23117 / BGSC 10A6 / LMG 26770 / FZB42) (Bacillus amyloliquefaciens subsp. plantarum).